A 632-amino-acid polypeptide reads, in one-letter code: tRNA-guanine(15) transglycosylase (632 aa).

Catalysis depends on Asp86, which acts as the Nucleophile. Substrate-binding residues include Asp121 and Gly186. The 76-residue stretch at 553 to 628 folds into the PUA domain; sequence NLRVFVKNES…IAVKIHEGRD (76 aa).

Belongs to the archaeosine tRNA-ribosyltransferase family. It depends on Zn(2+) as a cofactor.

The catalysed reaction is guanosine(15) in tRNA + 7-cyano-7-deazaguanine = 7-cyano-7-carbaguanosine(15) in tRNA + guanine. Its pathway is tRNA modification; archaeosine-tRNA biosynthesis. Its function is as follows. Exchanges the guanine residue with 7-cyano-7-deazaguanine (preQ0) at position 15 in the dihydrouridine loop (D-loop) of archaeal tRNAs. The polypeptide is tRNA-guanine(15) transglycosylase (Thermoplasma volcanium (strain ATCC 51530 / DSM 4299 / JCM 9571 / NBRC 15438 / GSS1)).